The sequence spans 161 residues: Tick receptor for ospA (161 aa).

As to quaternary structure, interacts with ospA protein from B.burgdorferi. In terms of processing, glycosylated. In terms of tissue distribution, specifically expressed in gut. Localizes predominantly in the intercellular spaces and luminal surface of the gut. In the gut, it localizes along tight junctions. Not expressed in salivary gland or hemolymph.

It localises to the cell membrane. Functionally, serves as a receptor for ospA protein of B.burgdorferi, the Lyme disease agent. Required for spirochetal colonization. Essential for pathogen adherence to the vector. The polypeptide is Tick receptor for ospA (TROSPA) (Ixodes scapularis (Black-legged tick)).